A 1444-amino-acid polypeptide reads, in one-letter code: DNA polymerase III PolC-type (1444 aa).

One can recognise an Exonuclease domain in the interval 428-584 (YCVFDVETTG…FDAEATAYLA (157 aa)).

Belongs to the DNA polymerase type-C family. PolC subfamily.

It localises to the cytoplasm. The enzyme catalyses DNA(n) + a 2'-deoxyribonucleoside 5'-triphosphate = DNA(n+1) + diphosphate. Functionally, required for replicative DNA synthesis. This DNA polymerase also exhibits 3' to 5' exonuclease activity. In Listeria innocua serovar 6a (strain ATCC BAA-680 / CLIP 11262), this protein is DNA polymerase III PolC-type.